A 347-amino-acid polypeptide reads, in one-letter code: Dihydroorotase (347 aa).

Zn(2+)-binding residues include H14 and H16. Substrate-binding positions include 16 to 18 (HLR) and N42. Zn(2+) is bound by residues K100, H137, and H175. Position 100 is an N6-carboxylysine (K100). A substrate-binding site is contributed by H137. Substrate is bound at residue L220. D248 contacts Zn(2+). The active site involves D248. Positions 252 and 264 each coordinate substrate.

Belongs to the metallo-dependent hydrolases superfamily. DHOase family. Class II DHOase subfamily. Homodimer. Zn(2+) is required as a cofactor.

The enzyme catalyses (S)-dihydroorotate + H2O = N-carbamoyl-L-aspartate + H(+). It participates in pyrimidine metabolism; UMP biosynthesis via de novo pathway; (S)-dihydroorotate from bicarbonate: step 3/3. In terms of biological role, catalyzes the reversible cyclization of carbamoyl aspartate to dihydroorotate. The chain is Dihydroorotase from Stutzerimonas stutzeri (strain A1501) (Pseudomonas stutzeri).